The primary structure comprises 299 residues: GTPase Era (299 aa).

In terms of domain architecture, Era-type G spans 5–172 (KSGFVSIIGR…IDVLKTYLPE (168 aa)). A G1 region spans residues 13-20 (GRPNVGKS). 13–20 (GRPNVGKS) contributes to the GTP binding site. Residues 39–43 (QTTRN) are G2. The segment at 60 to 63 (DTPG) is G3. GTP contacts are provided by residues 60–64 (DTPGI) and 122–125 (NKID). A G4 region spans residues 122–125 (NKID). The tract at residues 151-153 (ISA) is G5. The 78-residue stretch at 203–280 (TSEEIPHAIG…YLELWVKVQR (78 aa)) folds into the KH type-2 domain.

This sequence belongs to the TRAFAC class TrmE-Era-EngA-EngB-Septin-like GTPase superfamily. Era GTPase family. As to quaternary structure, monomer.

It is found in the cytoplasm. Its subcellular location is the cell membrane. In terms of biological role, an essential GTPase that binds both GDP and GTP, with rapid nucleotide exchange. Plays a role in 16S rRNA processing and 30S ribosomal subunit biogenesis and possibly also in cell cycle regulation and energy metabolism. This Staphylococcus aureus (strain Mu3 / ATCC 700698) protein is GTPase Era.